We begin with the raw amino-acid sequence, 113 residues long: U11-theraphotoxin-Hhn1a (113 aa).

A signal peptide spans 1–21; sequence MNTVRVTFLLVFVLAVSLGQA. Positions 22-74 are excised as a propeptide; that stretch reads DKDENRMEMQEKTEQGKSYLDFAENLLLQKLEELVAKLLEEDSEESRNSRQKR. 3 disulfide bridges follow: cysteine 75–cysteine 90, cysteine 82–cysteine 95, and cysteine 89–cysteine 110.

The protein belongs to the neurotoxin 14 (magi-1) family. 01 (HNTX-16) subfamily. As to expression, expressed by the venom gland.

It is found in the secreted. Functionally, probable ion channel inhibitor. This Cyriopagopus hainanus (Chinese bird spider) protein is U11-theraphotoxin-Hhn1a.